Consider the following 363-residue polypeptide: Disease resistance protein RBA1 (363 aa).

Residues proline 12–leucine 175 enclose the TIR domain. Residues arginine 21–arginine 26 and glycine 53 contribute to the NAD(+) site. The active site involves glutamate 86.

As to quaternary structure, homooligomer; homooligomerization is required for activity.

The protein resides in the cytoplasm. It localises to the nucleus. It is found in the nucleoplasm. The catalysed reaction is NAD(+) + H2O = ADP-D-ribose + nicotinamide + H(+). The enzyme catalyses NADP(+) + H2O = ADP-D-ribose 2'-phosphate + nicotinamide + H(+). Its function is as follows. Disease resistance (R) protein that specifically recognizes the HopBA1 type III effector protein from P.syringae, and triggers cell death. Acts as a NAD(+) hydrolase (NADase): in response to pathogen-recognition, catalyzes cleavage of NAD(+) into ADP-D-ribose (ADPR) and nicotinamide; NAD(+) cleavage triggering a defense system that promotes cell death. In addition to ADPR, also generates a cyclization variant of cyclic ADPR (cADPR), termed v-cADPR, for which the cyclizing bond is unknown. Also able to hydrolyze NADP(+), but not other NAD(+)-related molecules. The sequence is that of Disease resistance protein RBA1 from Arabidopsis thaliana (Mouse-ear cress).